Reading from the N-terminus, the 63-residue chain is MKSERAKQIIDSKKYIPVYYKNTPVHIEKVDNKENIAHIKSLNTDKEIVVNVKTLSECNKLNN.

The protein belongs to the SspH family.

The protein resides in the spore core. This chain is Small, acid-soluble spore protein H 2, found in Clostridium botulinum (strain ATCC 19397 / Type A).